Here is a 255-residue protein sequence, read N- to C-terminus: Kallikrein-15 (255 aa).

Positions 1–15 are cleaved as a signal peptide; sequence MWLLLPLSFLLTSTA. The propeptide at 16 to 20 is activation peptide; it reads QDGGK. The interval 21 to 253 is serine protease; sequence LLEGEECAPH…YVKWIRETMK (233 aa). Cysteines 46 and 62 form a disulfide. Active-site charge relay system residues include histidine 61 and aspartate 105. Intrachain disulfides connect cysteine 137–cysteine 214, cysteine 179–cysteine 193, and cysteine 204–cysteine 229. Residue asparagine 170 is glycosylated (N-linked (GlcNAc...) asparagine). The active-site Charge relay system is serine 208. N-linked (GlcNAc...) asparagine glycosylation occurs at asparagine 231.

This sequence belongs to the peptidase S1 family. Kallikrein subfamily.

It localises to the secreted. In terms of biological role, protease whose physiological substrate is not yet known. The protein is Kallikrein-15 (KLK15) of Saguinus oedipus (Cotton-top tamarin).